Consider the following 480-residue polypeptide: Aspartyl/glutamyl-tRNA(Asn/Gln) amidotransferase subunit B (480 aa).

It belongs to the GatB/GatE family. GatB subfamily. In terms of assembly, heterotrimer of A, B and C subunits.

The catalysed reaction is L-glutamyl-tRNA(Gln) + L-glutamine + ATP + H2O = L-glutaminyl-tRNA(Gln) + L-glutamate + ADP + phosphate + H(+). It catalyses the reaction L-aspartyl-tRNA(Asn) + L-glutamine + ATP + H2O = L-asparaginyl-tRNA(Asn) + L-glutamate + ADP + phosphate + 2 H(+). Allows the formation of correctly charged Asn-tRNA(Asn) or Gln-tRNA(Gln) through the transamidation of misacylated Asp-tRNA(Asn) or Glu-tRNA(Gln) in organisms which lack either or both of asparaginyl-tRNA or glutaminyl-tRNA synthetases. The reaction takes place in the presence of glutamine and ATP through an activated phospho-Asp-tRNA(Asn) or phospho-Glu-tRNA(Gln). This is Aspartyl/glutamyl-tRNA(Asn/Gln) amidotransferase subunit B from Streptococcus agalactiae serotype III (strain NEM316).